The sequence spans 66 residues: Large ribosomal subunit protein bL33c (66 aa).

It belongs to the bacterial ribosomal protein bL33 family.

The protein localises to the plastid. It localises to the chloroplast. This Saccharum officinarum (Sugarcane) protein is Large ribosomal subunit protein bL33c.